We begin with the raw amino-acid sequence, 150 residues long: Large ribosomal subunit protein uL11 (150 aa).

This sequence belongs to the universal ribosomal protein uL11 family. Part of the ribosomal stalk of the 50S ribosomal subunit. Interacts with L10 and the large rRNA to form the base of the stalk. L10 forms an elongated spine to which L12 dimers bind in a sequential fashion forming a multimeric L10(L12)X complex. Post-translationally, one or more lysine residues are methylated.

Forms part of the ribosomal stalk which helps the ribosome interact with GTP-bound translation factors. The sequence is that of Large ribosomal subunit protein uL11 from Jannaschia sp. (strain CCS1).